A 243-amino-acid chain; its full sequence is Voltage-gated monoatomic cation channel TMEM109 (243 aa).

The N-terminal stretch at 1-33 (MAGAHSTPLWSRHLLKAVLMVLVALFLVHSASA) is a signal peptide. The Lumenal segment spans residues 34 to 83 (QSHREFASPGQQKKETSADILTQIGRSLKEMLDTWLGPETMHVISETLLQ). A helical transmembrane segment spans residues 84-104 (VMWAISSAISVACFALSGIAA). At 105–135 (QLLSALGLDGEQLTQGLKLSPSQVQTLLLWG) the chain is on the cytoplasmic side. The chain crosses the membrane as a helical span at residues 136 to 156 (AAALVIYWLLSLLLGLVLALL). Topologically, residues 157 to 185 (GRILGGLKLVLFVAGFVALVRSVPDPSTR) are lumenal. Residues 186 to 205 (ALMLLALLTLFALLSRLTGS) form a helical membrane-spanning segment. Over 206 to 243 (RSSGSHLEAKVRGLERQIEELRGRQRRAAKMPRSMEEE) the chain is Cytoplasmic.

In terms of assembly, homooligomer. Interacts with CRYAB; in the cellular response to DNA damage.

It is found in the nucleus outer membrane. Its subcellular location is the endoplasmic reticulum membrane. It localises to the sarcoplasmic reticulum membrane. The enzyme catalyses K(+)(in) = K(+)(out). It catalyses the reaction Ca(2+)(in) = Ca(2+)(out). Functionally, functions as a voltage-gated monoatomic cation channel permeable to both potassium and calcium. Plays a role in the cellular response to DNA damage. This is Voltage-gated monoatomic cation channel TMEM109 from Mus musculus (Mouse).